Consider the following 499-residue polypeptide: Neuronal acetylcholine receptor subunit alpha-3 (499 aa).

The N-terminal stretch at M1 to A25 is a signal peptide. Residues S26–I244 lie on the Extracellular side of the membrane. N-linked (GlcNAc...) asparagine glycans are attached at residues N49 and N166. 2 disulfides stabilise this stretch: C153/C167 and C217/C218. A helical transmembrane segment spans residues P245–P260. Residues S261–D262 are Cytoplasmic-facing. A helical transmembrane segment spans residues C263–V279. E265 is a Na(+) binding site. Over F280 to Y301 the chain is Extracellular. Residues L302–L320 form a helical membrane-spanning segment. Residues N321–V468 lie on the Cytoplasmic side of the membrane. Phosphoserine occurs at positions 407 and 410. Residues I469–G487 traverse the membrane as a helical segment. The Extracellular portion of the chain corresponds to L488–T499.

This sequence belongs to the ligand-gated ion channel (TC 1.A.9) family. Acetylcholine receptor (TC 1.A.9.1) subfamily. Alpha-3/CHRNA3 sub-subfamily. Neuronal AChR is composed of two different types of subunits: alpha and beta. CHRNA3/Alpha-3 subunit can be combined to CHRNB2/beta-2 or CHRNB4/beta-4 to give rise to functional receptors. Part of a complex composed of STUB1/CHIP, VCP/p97, CHRNA3, and UBXN2A that modulates the ubiquitination and endoplasmic reticulum-associated degradation (ERAD) of CHRNA3. Within the complex UBXN2A acts as a scaffold protein required for the interaction of CHRNA3 with VCP/p97, this interaction also inhibits CHRNA3 ubiquitination by STUB1/CHIP and subsequently ERAD. Interacts with UBXN2A (via SEP domain), the interaction is required for the interaction of CHRNA3 in the STUB1:VCP:UBXN2A complex. Interacts with RIC3; which is required for proper folding and assembly. In terms of processing, ubiquitinated; by STUB1/CHIP and thereafter degraded by the 26S proteosome complex. Expressed in neurons. Expressed in umbrella cells of urothelium (at protein level).

It localises to the synaptic cell membrane. The protein localises to the cell membrane. The protein resides in the endoplasmic reticulum. It is found in the golgi apparatus. The catalysed reaction is Ca(2+)(in) = Ca(2+)(out). It catalyses the reaction K(+)(in) = K(+)(out). It carries out the reaction Na(+)(in) = Na(+)(out). Its activity is regulated as follows. Activated by a myriad of ligands such as acetylcholine, cytisine, nicotine, choline and epibatidine. The heteropentamer CHRNA3:CHRNB2 activity is blocked by alpha-conotoxins ImI, ImII, PnIA, GID and MII. The heteropentamer CHRNA3:CHRNB4 activity is blocked by the alpha-conotoxin ImI and AuIB. In terms of biological role, component of neuronal acetylcholine receptors (nAChRs) that function as pentameric, ligand-gated cation channels with high calcium permeability among other activities. nAChRs are excitatory neurotrasnmitter receptors formed by a collection of nAChR subunits known to mediate synaptic transmission in the nervous system and the neuromuscular junction. Each nAchR subunit confers differential attributes to channel properties, including activation, deactivation and desensitization kinetics, pH sensitivity, cation permeability, and binding to allosteric modulators. CHRNA3 forms heteropentameric neuronal acetylcholine receptors with CHRNB2 and CHRNB4. CHRNA3:CHRNB4 being predominant in neurons of the autonomic ganglia, it is known as ganglionic nicotinic receptor. CHRNA3:CHRNB4 also plays an important role in the habenulo-interpeduncular tract, modulating the mesolimbic dopamine system and affecting reward circuits and addiction. Hypothalamic CHRNA3:CHRNB4 nAChR activation by nicotine leads to activation of POMC neurons and a decrease in food intake. Also expressed in the urothelium where it modulates reflex bladder activity by increasing intracellular calcium through extracellular influx and basal ATP release. This is Neuronal acetylcholine receptor subunit alpha-3 (Chrna3) from Rattus norvegicus (Rat).